The chain runs to 92 residues: Acylphosphatase (92 aa).

Cys-5 and Cys-49 form a disulfide bridge. In terms of domain architecture, Acylphosphatase-like spans 5–92 (CIIAWIYGRV…SGELTDFRIR (88 aa)). Active-site residues include Arg-20 and Asn-38.

This sequence belongs to the acylphosphatase family.

The enzyme catalyses an acyl phosphate + H2O = a carboxylate + phosphate + H(+). The sequence is that of Acylphosphatase from Shigella boydii serotype 4 (strain Sb227).